Here is a 198-residue protein sequence, read N- to C-terminus: Putative 3-methyladenine DNA glycosylase (198 aa).

The protein belongs to the DNA glycosylase MPG family.

The protein is Putative 3-methyladenine DNA glycosylase of Natranaerobius thermophilus (strain ATCC BAA-1301 / DSM 18059 / JW/NM-WN-LF).